The primary structure comprises 349 residues: Nicotinate-nucleotide--dimethylbenzimidazole phosphoribosyltransferase (349 aa).

Catalysis depends on glutamate 318, which acts as the Proton acceptor.

Belongs to the CobT family.

The catalysed reaction is 5,6-dimethylbenzimidazole + nicotinate beta-D-ribonucleotide = alpha-ribazole 5'-phosphate + nicotinate + H(+). It participates in nucleoside biosynthesis; alpha-ribazole biosynthesis; alpha-ribazole from 5,6-dimethylbenzimidazole: step 1/2. Its function is as follows. Catalyzes the synthesis of alpha-ribazole-5'-phosphate from nicotinate mononucleotide (NAMN) and 5,6-dimethylbenzimidazole (DMB). The sequence is that of Nicotinate-nucleotide--dimethylbenzimidazole phosphoribosyltransferase from Alkaliphilus metalliredigens (strain QYMF).